Consider the following 276-residue polypeptide: 6-chlorohydroxyquinol 1,2-dioxygenase (276 aa).

Residues tyrosine 157, tyrosine 191, histidine 215, and histidine 217 each coordinate Fe cation.

It belongs to the intradiol ring-cleavage dioxygenase family. Fe(3+) serves as cofactor.

It functions in the pathway aromatic compound metabolism. Its pathway is xenobiotic degradation. Functionally, involved in the degradation of 2,4,6-trichlorophenol (2,4,6-TCP). May catalyze the oxidation of 6-chlorohydroxyquinol (6-CHQ) to 2-chloromaleylacetate (2-CMA). This chain is 6-chlorohydroxyquinol 1,2-dioxygenase, found in Cupriavidus pinatubonensis (strain JMP 134 / LMG 1197) (Cupriavidus necator (strain JMP 134)).